Consider the following 138-residue polypeptide: Ribosome-binding factor A (138 aa).

It belongs to the RbfA family. As to quaternary structure, monomer. Binds 30S ribosomal subunits, but not 50S ribosomal subunits or 70S ribosomes.

The protein localises to the cytoplasm. In terms of biological role, one of several proteins that assist in the late maturation steps of the functional core of the 30S ribosomal subunit. Associates with free 30S ribosomal subunits (but not with 30S subunits that are part of 70S ribosomes or polysomes). Required for efficient processing of 16S rRNA. May interact with the 5'-terminal helix region of 16S rRNA. The polypeptide is Ribosome-binding factor A (Sodalis glossinidius (strain morsitans)).